A 390-amino-acid polypeptide reads, in one-letter code: tRNA-specific 2-thiouridylase MnmA (390 aa).

ATP-binding positions include glycine 29–serine 36 and leucine 55. Cysteine 116 serves as the catalytic Nucleophile. The cysteines at positions 116 and 225 are disulfide-linked. Residue glycine 141 participates in ATP binding. Residues lysine 175 to glutamine 177 form an interaction with tRNA region. Cysteine 225 functions as the Cysteine persulfide intermediate in the catalytic mechanism. The interaction with tRNA stretch occupies residues arginine 330–tyrosine 331.

The protein belongs to the MnmA/TRMU family.

It is found in the cytoplasm. The catalysed reaction is S-sulfanyl-L-cysteinyl-[protein] + uridine(34) in tRNA + AH2 + ATP = 2-thiouridine(34) in tRNA + L-cysteinyl-[protein] + A + AMP + diphosphate + H(+). Catalyzes the 2-thiolation of uridine at the wobble position (U34) of tRNA, leading to the formation of s(2)U34. The chain is tRNA-specific 2-thiouridylase MnmA from Prochlorococcus marinus (strain MIT 9515).